The chain runs to 196 residues: Somatotropin (196 aa).

An N-terminal signal peptide occupies residues 1–18; sequence MEKVVLLLSVLSLGVVCP. Gln-19 carries the pyrrolidone carboxylic acid modification. His-35 serves as a coordination point for Zn(2+). The cysteines at positions 69 and 169 are disulfide-linked. Position 178 (Glu-178) interacts with Zn(2+). A disulfide bond links Cys-186 and Cys-194.

The protein belongs to the somatotropin/prolactin family.

The protein resides in the secreted. Growth hormone plays an important role in growth control and is involved in the regulation of several anabolic processes. Implicated as an osmoregulatory substance important for seawater adaptation. The sequence is that of Somatotropin (gh) from Siganus guttatus (Orange-spotted spinefoot).